A 212-amino-acid chain; its full sequence is Synaptosomal-associated protein 25 (212 aa).

T-SNARE coiled-coil homology domains lie at 26-88 (QGVA…LSGM) and 148-210 (DARE…AHQL).

It belongs to the SNAP-25 family. In terms of tissue distribution, exclusively found in brain and ganglia.

Its subcellular location is the synapse. It localises to the synaptosome. In terms of biological role, may play an important role in the synaptic function of specific neuronal systems. Associates with proteins involved in vesicle docking and membrane fusion. This Drosophila melanogaster (Fruit fly) protein is Synaptosomal-associated protein 25 (Snap25).